We begin with the raw amino-acid sequence, 77 residues long: Integrin beta-2 (77 aa).

The cysteines at positions 36 and 43 are disulfide-linked. N-linked (GlcNAc...) asparagine glycosylation is present at N54.

The protein belongs to the integrin beta chain family. Dimer of an alpha and beta subunit.

The protein localises to the membrane. Integrins are a large family of cell surface glycoproteins that mediate cell to cell and cell to matrix adhesion. This Xenopus laevis (African clawed frog) protein is Integrin beta-2 (itgb2).